A 410-amino-acid chain; its full sequence is Histone-lysine N-methyltransferase SUV39H2 (410 aa).

The region spanning 47–105 is the Chromo domain; it reads YEVEYLCDYKVVKDMEYYLVKWKGWPDSTNTWEPLQNLKCPLLLQQFSNDKHNYLSQVK. Positions 189–247 constitute a Pre-SET domain; it reads FGCSCTDCFFQKCCPAEAGVLLAYNKNQQIKIPPGTPIYECNSRCQCGPDCPNRIVQKG. Zn(2+) is bound by residues C191, C193, C196, C201, C202, C229, C233, C235, and C239. Residues 250 to 373 enclose the SET domain; it reads YSLCIFRTSN…AGEELTFDYQ (124 aa). Residues 261–263 and 330–331 each bind S-adenosyl-L-methionine; these read RGW and NH. C333 is a binding site for Zn(2+). Y372 serves as a coordination point for S-adenosyl-L-methionine. Phosphoserine occurs at positions 381, 384, and 388. Residues 394–410 form the Post-SET domain; sequence VRTVCKCGAVTCRGYLN. C398 provides a ligand contact to Zn(2+). S-adenosyl-L-methionine is bound at residue K399. Zn(2+) is bound by residues C400 and C405.

It belongs to the class V-like SAM-binding methyltransferase superfamily. Histone-lysine methyltransferase family. Suvar3-9 subfamily. Interacts with SMAD5. The large PER complex involved in the histone methylation is composed of at least PER2, CBX3, TRIM28, SUV39H1 and/or SUV39H2; CBX3 mediates the formation of the complex. Ubiquitinated by the DCX(DCAF13) E3 ubiquitin ligase complex, leading to its degradation.

Its subcellular location is the nucleus. It localises to the chromosome. It is found in the centromere. It carries out the reaction L-lysyl(9)-[histone H3] + 3 S-adenosyl-L-methionine = N(6),N(6),N(6)-trimethyl-L-lysyl(9)-[histone H3] + 3 S-adenosyl-L-homocysteine + 3 H(+). Its function is as follows. Histone methyltransferase that specifically trimethylates 'Lys-9' of histone H3 using monomethylated H3 'Lys-9' as substrate. H3 'Lys-9' trimethylation represents a specific tag for epigenetic transcriptional repression by recruiting HP1 (CBX1, CBX3 and/or CBX5) proteins to methylated histones. Mainly functions in heterochromatin regions, thereby playing a central role in the establishment of constitutive heterochromatin at pericentric and telomere regions. H3 'Lys-9' trimethylation is also required to direct DNA methylation at pericentric repeats. SUV39H1 is targeted to histone H3 via its interaction with RB1 and is involved in many processes, such as cell cycle regulation, transcriptional repression and regulation of telomere length. May participate in regulation of higher-order chromatin organization during spermatogenesis. Recruited by the large PER complex to the E-box elements of the circadian target genes such as PER2 itself or PER1, contributes to the conversion of local chromatin to a heterochromatin-like repressive state through H3 'Lys-9' trimethylation. This chain is Histone-lysine N-methyltransferase SUV39H2 (SUV39H2), found in Homo sapiens (Human).